The sequence spans 273 residues: Inositol monophosphatase 1 (273 aa).

Glu71, Asp91, Val93, and Asp94 together coordinate Mg(2+). Glu71 lines the substrate pocket. Substrate contacts are provided by residues 93 to 96 (VDGT), 194 to 196 (GSC), and Asp221. Residue Asp221 coordinates Mg(2+).

The protein belongs to the inositol monophosphatase superfamily. It depends on Mg(2+) as a cofactor. As to expression, expressed in seedlings, flowers, young and matures green fruits. Detected in roots and stems.

It carries out the reaction a myo-inositol phosphate + H2O = myo-inositol + phosphate. It participates in polyol metabolism; myo-inositol biosynthesis; myo-inositol from D-glucose 6-phosphate: step 2/2. Its function is as follows. Responsible for the provision of inositol required for synthesis of phosphatidylinositol and polyphosphoinositides. The sequence is that of Inositol monophosphatase 1 (IMP1) from Solanum lycopersicum (Tomato).